The following is a 193-amino-acid chain: MLRTLRPALVLFAALTLLTGVAYPLAVTGLAQVLFPEQANGSLIERGGTVIGSALIAQAFTGEAYFHPRPSMAGTGYEANNSGASNLGPTNQGLVDQVAARITAAKEANPGNYGGVPADLVTASGSGLDPHISQAAARWQAARVAKARGLDLQRAVALVYEFTSPRQLGILGEPRVNVLAINLALDERFPLAH.

A helical membrane pass occupies residues 7-27 (PALVLFAALTLLTGVAYPLAV).

It belongs to the KdpC family. In terms of assembly, the system is composed of three essential subunits: KdpA, KdpB and KdpC.

It is found in the cell inner membrane. In terms of biological role, part of the high-affinity ATP-driven potassium transport (or Kdp) system, which catalyzes the hydrolysis of ATP coupled with the electrogenic transport of potassium into the cytoplasm. This subunit acts as a catalytic chaperone that increases the ATP-binding affinity of the ATP-hydrolyzing subunit KdpB by the formation of a transient KdpB/KdpC/ATP ternary complex. In Rhodospirillum rubrum (strain ATCC 11170 / ATH 1.1.1 / DSM 467 / LMG 4362 / NCIMB 8255 / S1), this protein is Potassium-transporting ATPase KdpC subunit.